Reading from the N-terminus, the 557-residue chain is Urocanate hydratase (557 aa).

Residues 1-20 are disordered; the sequence is MSNPRHNEREVRSPRGDELN. NAD(+) contacts are provided by residues 52-53, Gln-130, 176-178, Glu-196, Arg-201, 242-243, 263-267, 273-274, and Tyr-322; these read GG, GMG, NA, QTSAH, and YL. The active site involves Cys-410. Residue Gly-492 coordinates NAD(+).

The protein belongs to the urocanase family. It depends on NAD(+) as a cofactor.

The protein resides in the cytoplasm. It carries out the reaction 4-imidazolone-5-propanoate = trans-urocanate + H2O. The protein operates within amino-acid degradation; L-histidine degradation into L-glutamate; N-formimidoyl-L-glutamate from L-histidine: step 2/3. Catalyzes the conversion of urocanate to 4-imidazolone-5-propionate. In Brucella melitensis biotype 2 (strain ATCC 23457), this protein is Urocanate hydratase.